The chain runs to 160 residues: SsrA-binding protein (160 aa).

This sequence belongs to the SmpB family.

It is found in the cytoplasm. In terms of biological role, required for rescue of stalled ribosomes mediated by trans-translation. Binds to transfer-messenger RNA (tmRNA), required for stable association of tmRNA with ribosomes. tmRNA and SmpB together mimic tRNA shape, replacing the anticodon stem-loop with SmpB. tmRNA is encoded by the ssrA gene; the 2 termini fold to resemble tRNA(Ala) and it encodes a 'tag peptide', a short internal open reading frame. During trans-translation Ala-aminoacylated tmRNA acts like a tRNA, entering the A-site of stalled ribosomes, displacing the stalled mRNA. The ribosome then switches to translate the ORF on the tmRNA; the nascent peptide is terminated with the 'tag peptide' encoded by the tmRNA and targeted for degradation. The ribosome is freed to recommence translation, which seems to be the essential function of trans-translation. The protein is SsrA-binding protein of Chloroflexus aurantiacus (strain ATCC 29364 / DSM 637 / Y-400-fl).